Consider the following 86-residue polypeptide: Triple QxxK/R motif-containing protein (86 aa).

Residues valine 51–leucine 71 form a helical membrane-spanning segment.

The protein belongs to the TRIQK family.

It is found in the endoplasmic reticulum membrane. In terms of biological role, may play a role in cell growth and maintenance of cell morphology. This Pongo abelii (Sumatran orangutan) protein is Triple QxxK/R motif-containing protein (TRIQK).